We begin with the raw amino-acid sequence, 604 residues long: Kelch-like protein 15 (604 aa).

Residues 31–98 (LDVTLVIEDH…MYYGTIELSM (68 aa)) form the BTB domain. The BACK domain occupies 133–237 (CAEIMRLLDD…TPSSVFEKVK (105 aa)). 5 Kelch repeats span residues 328–379 (FVFL…VIGK), 381–426 (IYAV…VLNN), 428–473 (LFIT…NKSK), 489–542 (KLYV…VLDK), and 544–590 (IMVL…VCNL).

In terms of assembly, homodimer. Dimerization does not affect PPP2R5B-binding, but is required for its proteasomal degradation. Interacts with CUL3. Directly interacts with PPP2R5B; this interaction leads to PPP2R5B proteasomal degradation. Interacts with RBBP8/CtIP; this interaction leads to RBBP8 proteasomal degradation. Interacts with PACMP micropeptide; interaction prevents ubiquitination and degradation of RBBP8/CtIP.

Its subcellular location is the nucleus. Its pathway is protein modification; protein ubiquitination. Substrate-specific adapter for CUL3 E3 ubiquitin-protein ligase complex. Acts as an adapter for CUL3 to target the serine/threonine-protein phosphatase 2A (PP2A) subunit PPP2R5B for ubiquitination and subsequent proteasomal degradation, thus promoting exchange with other regulatory subunits and regulating PP2A holoenzyme composition. Acts as an adapter for CUL3 to target the DNA-end resection factor RBBP8/CtIP for ubiquitination and subsequent proteasomal degradation. Through the regulation of RBBP8/CtIP protein turnover, plays a key role in DNA damage response, favoring DNA double-strand repair through error-prone non-homologous end joining (NHEJ) over error-free, RBBP8-mediated homologous recombination (HR). The sequence is that of Kelch-like protein 15 (Klhl15) from Mus musculus (Mouse).